Reading from the N-terminus, the 60-residue chain is Mastoparan-V (60 aa).

Positions 1-27 are cleaved as a signal peptide; sequence MKNTILILFTAFIALLGFFGMSAEALA. AXPX repeat units lie at residues 27-30, 31-34, 35-38, and 41-44; these read ADPV, ADPL, AGPN, and ADPE. A propeptide spanning residues 28-45 is cleaved from the precursor; sequence DPVADPLAGPNAEADPEA. A Leucine amide modification is found at Leu-59.

This sequence belongs to the MCD family. Mastoparan subfamily. As to expression, expressed by the venom gland.

It localises to the secreted. The protein resides in the target cell membrane. Antimicrobial and mast cell degranulating peptide. Has broad spectrum antibacterial activity against both Gram-positive and Gram-negative bacteria (S.aureus MIC=32-64 ug/ml, S.xylosus MIC=3 ug/ml, S.alactolyticus MIC=16 ug/ml, C.koseri MIC=4 ug/ml, E.coli MIC=8 ug/ml, K.pneumoniae MIC=64 ug/ml, P.aerugiosa MIC=256 ug/ml, S.choleraesuis MIC=32 ug/ml, S.typhimurium MIC=32 ug/ml, V.parahamelytics MIC=32 ug/ml). Affects membrane permeability of E.coli. Shows hemolytic activities on sheep, chicken and human erythrocytes. Its mast cell degranulation activity may be related to the activation of G-protein coupled receptors in mast cells as well as interaction with other proteins located in cell endosomal membranes in the mast cells. The protein is Mastoparan-V of Vespa velutina flavitarsus (Asian hornet).